A 391-amino-acid chain; its full sequence is Elongation factor Tu (391 aa).

The tr-type G domain occupies 10–201 (KPHVNIGTIG…AVDEYIPTPA (192 aa)). The G1 stretch occupies residues 19–26 (GHVDHGKT). A GTP-binding site is contributed by 19-26 (GHVDHGKT). Thr26 contacts Mg(2+). A G2 region spans residues 55-59 (GITIS). Residues 76–79 (DCPG) form a G3 region. GTP-binding positions include 76–80 (DCPGH) and 131–134 (NKVD). Residues 131–134 (NKVD) form a G4 region. A G5 region spans residues 169 to 171 (SAL).

The protein belongs to the TRAFAC class translation factor GTPase superfamily. Classic translation factor GTPase family. EF-Tu/EF-1A subfamily. Monomer.

It localises to the cytoplasm. The enzyme catalyses GTP + H2O = GDP + phosphate + H(+). Its function is as follows. GTP hydrolase that promotes the GTP-dependent binding of aminoacyl-tRNA to the A-site of ribosomes during protein biosynthesis. This Cereibacter sphaeroides (strain ATCC 17029 / ATH 2.4.9) (Rhodobacter sphaeroides) protein is Elongation factor Tu.